Consider the following 216-residue polypeptide: GTP-binding nuclear protein Ran, testis-specific isoform (216 aa).

Alanine 2 carries the post-translational modification N-acetylalanine. The 165-residue stretch at 7–171 (PQIQFKLVLV…FWLARKLIGD (165 aa)) folds into the Small GTPase Ran-type domain. 17–24 (GDGGTGKT) is a binding site for GTP. Threonine 24 carries the phosphothreonine modification. Residues 37–45 (KEYVATLGV) are switch-I. At lysine 60 the chain carries N6-acetyllysine. GTP is bound at residue 65-69 (DTAGQ). A switch-II region spans residues 68 to 84 (GQEKFGGLRDGYYIQAQ). Lysine 71 is subject to N6-acetyllysine; alternate. Lysine 71 participates in a covalent cross-link: Glycyl lysine isopeptide (Lys-Gly) (interchain with G-Cter in SUMO2); alternate. Residue lysine 71 forms a Glycyl lysine isopeptide (Lys-Gly) (interchain with G-Cter in ubiquitin); alternate linkage. Position 99 is an N6-acetyllysine (lysine 99). 122 to 125 (NKVD) provides a ligand contact to GTP. N6-acetyllysine is present on lysine 134. A Glycyl lysine isopeptide (Lys-Gly) (interchain with G-Cter in SUMO2) cross-link involves residue lysine 152. Lysine 159 bears the N6-acetyllysine; alternate mark. N6-succinyllysine; alternate is present on lysine 159.

This sequence belongs to the small GTPase superfamily. Ran family. Testis specific.

Its subcellular location is the nucleus. It catalyses the reaction GTP + H2O = GDP + phosphate + H(+). Functionally, GTP-binding protein involved in nucleocytoplasmic transport. Required for the import of protein into the nucleus and also for RNA export. Involved in chromatin condensation and control of cell cycle. In Rattus norvegicus (Rat), this protein is GTP-binding nuclear protein Ran, testis-specific isoform (Rasl2-9).